Reading from the N-terminus, the 194-residue chain is Small ribosomal subunit protein uS5 (194 aa).

One can recognise an S5 DRBM domain in the interval 26 to 89; the sequence is LEEKVVEIRR…ADAKKHLIRV (64 aa).

The protein belongs to the universal ribosomal protein uS5 family. Part of the 30S ribosomal subunit. Contacts proteins S4 and S8.

With S4 and S12 plays an important role in translational accuracy. Functionally, located at the back of the 30S subunit body where it stabilizes the conformation of the head with respect to the body. The polypeptide is Small ribosomal subunit protein uS5 (Persephonella marina (strain DSM 14350 / EX-H1)).